A 463-amino-acid chain; its full sequence is Ribulose bisphosphate carboxylase (463 aa).

A substrate-binding site is contributed by asparagine 116. The Proton acceptor role is filled by lysine 171. Lysine 173 contacts substrate. 3 residues coordinate Mg(2+): lysine 196, aspartate 198, and glutamate 199. Lysine 196 is subject to N6-carboxylysine. Catalysis depends on histidine 294, which acts as the Proton acceptor. Residues arginine 295, histidine 328, and serine 375 each contribute to the substrate site.

This sequence belongs to the RuBisCO large chain family. Type II subfamily. Homodimer. Requires Mg(2+) as cofactor.

It carries out the reaction 2 (2R)-3-phosphoglycerate + 2 H(+) = D-ribulose 1,5-bisphosphate + CO2 + H2O. The catalysed reaction is D-ribulose 1,5-bisphosphate + O2 = 2-phosphoglycolate + (2R)-3-phosphoglycerate + 2 H(+). Its function is as follows. RuBisCO catalyzes two reactions: the carboxylation of D-ribulose 1,5-bisphosphate, the primary event in carbon dioxide fixation, as well as the oxidative fragmentation of the pentose substrate. Both reactions occur simultaneously and in competition at the same active site. The sequence is that of Ribulose bisphosphate carboxylase from Hydrogenovibrio marinus.